The primary structure comprises 61 residues: Double gene block protein 1 (61 aa).

Residues 15 to 45 are disordered; the sequence is LAGNRGKQKTRRSVAKDAIRKPASDSTNGGN. Residues 17 to 35 form an RNA-binding region; it reads GNRGKQKTRRSVAKDAIRK. Positions 28-37 are enriched in basic and acidic residues; sequence VAKDAIRKPA.

This sequence belongs to the carmovirus double gene block protein 1 family. In terms of assembly, homodimer.

In terms of biological role, cell-to-cell movement. Displays RNA-binding activity. The protein is Double gene block protein 1 of Carnation mottle virus (isolate China/Shanghai) (CarMV).